A 584-amino-acid chain; its full sequence is ATP-dependent lipid A-core flippase (584 aa).

The next 5 membrane-spanning stretches (helical) occupy residues 18 to 38, 65 to 85, 155 to 175, 252 to 272, and 277 to 297; these read LWPI…TLIL, VFVW…FSGF, IIGL…ILVL, IFDP…LYAA, and VMEM…IVLM. Residues 30–312 enclose the ABC transmembrane type-1 domain; that stretch reads VVASITLILN…LTNVSAQFQR (283 aa). Residues 344-580 enclose the ABC transporter domain; the sequence is IIFDDVTFFY…QGIYAQLYKL (237 aa). Residue 378-385 coordinates ATP; sequence GRSGSGKS.

It belongs to the ABC transporter superfamily. Lipid exporter (TC 3.A.1.106) family. As to quaternary structure, homodimer.

The protein localises to the cell inner membrane. The catalysed reaction is ATP + H2O + lipid A-core oligosaccharideSide 1 = ADP + phosphate + lipid A-core oligosaccharideSide 2.. Involved in lipopolysaccharide (LPS) biosynthesis. Translocates lipid A-core from the inner to the outer leaflet of the inner membrane. Transmembrane domains (TMD) form a pore in the inner membrane and the ATP-binding domain (NBD) is responsible for energy generation. This Blochmanniella pennsylvanica (strain BPEN) protein is ATP-dependent lipid A-core flippase.